The following is a 492-amino-acid chain: Catalase (492 aa).

Residues histidine 65 and asparagine 138 contribute to the active site. Tyrosine 348 serves as a coordination point for heme.

This sequence belongs to the catalase family. In terms of assembly, homotetramer. Heme serves as cofactor.

Its subcellular location is the cytoplasm. The protein localises to the cytosol. It is found in the peroxisome matrix. It catalyses the reaction 2 H2O2 = O2 + 2 H2O. Catalyzes the degradation of hydrogen peroxide (H(2)O(2)) generated by peroxisomal oxidases to water and oxygen, thereby protecting cells from the toxic effects of hydrogen peroxide. The sequence is that of Catalase from Ipomoea batatas (Sweet potato).